The primary structure comprises 398 residues: MKKYNRIFTIVVDSLGIGETEDSKEYGDIGVDTLRHISESVESFNIPNLQKLGLANLHSINHVEPVEKPLAYFMKMKEASVGKDTMTGHWEMMGLKIEKPFQTFTDTGFPQELLDELSKRTGRSIVGNKSASGTEILDELGEHQIKTGDMIVYTSADSVLQICGHEENEIFGLDELYRCCEIARDLTLKDEWKVGRVIARPYVGMKKGEFKRTSNRHDYALKPYGTTVLNTLKDNGLDVISVGKIKDIFDGEGITESNASKSSVHGMEQTLEIMDKDFKGVCFVNLVDFDALWGHRRNPIGYAEELEKFDVNLEKLLNKLKEDDLLIITADHGNDPTYKGTDHTREYVPFLAYSPSMTGNGLMETSNSFATIGATIAENFEIDMPKNTIGQSVLEKLL.

Mn(2+) contacts are provided by aspartate 13, aspartate 290, histidine 295, aspartate 331, histidine 332, and histidine 343.

This sequence belongs to the phosphopentomutase family. Mn(2+) is required as a cofactor.

It localises to the cytoplasm. It catalyses the reaction 2-deoxy-alpha-D-ribose 1-phosphate = 2-deoxy-D-ribose 5-phosphate. The catalysed reaction is alpha-D-ribose 1-phosphate = D-ribose 5-phosphate. Its pathway is carbohydrate degradation; 2-deoxy-D-ribose 1-phosphate degradation; D-glyceraldehyde 3-phosphate and acetaldehyde from 2-deoxy-alpha-D-ribose 1-phosphate: step 1/2. Functionally, isomerase that catalyzes the conversion of deoxy-ribose 1-phosphate (dRib-1-P) and ribose 1-phosphate (Rib-1-P) to deoxy-ribose 5-phosphate (dRib-5-P) and ribose 5-phosphate (Rib-5-P), respectively. The protein is Phosphopentomutase of Clostridium tetani (strain Massachusetts / E88).